A 483-amino-acid polypeptide reads, in one-letter code: Ribulose bisphosphate carboxylase large chain (483 aa).

Residues 1 to 2 constitute a propeptide that is removed on maturation; the sequence is MS. Substrate contacts are provided by Asn123 and Thr173. The active-site Proton acceptor is the Lys175. Lys177 contributes to the substrate binding site. Mg(2+) is bound by residues Lys201, Asp203, and Glu204. Position 201 is an N6-carboxylysine (Lys201). Ser208 carries the phosphoserine modification. The Proton acceptor role is filled by His294. Arg295 and His327 together coordinate substrate. Position 330 is a phosphothreonine (Thr330). Ser379 contacts substrate.

It belongs to the RuBisCO large chain family. Type I subfamily. Heterohexadecamer of 8 large chains and 8 small chains; disulfide-linked. The disulfide link is formed within the large subunit homodimers. The cofactor is Mg(2+). The disulfide bond which can form in the large chain dimeric partners within the hexadecamer appears to be associated with oxidative stress and protein turnover.

The protein resides in the plastid. It localises to the chloroplast. The enzyme catalyses 2 (2R)-3-phosphoglycerate + 2 H(+) = D-ribulose 1,5-bisphosphate + CO2 + H2O. It carries out the reaction D-ribulose 1,5-bisphosphate + O2 = 2-phosphoglycolate + (2R)-3-phosphoglycerate + 2 H(+). Functionally, ruBisCO catalyzes two reactions: the carboxylation of D-ribulose 1,5-bisphosphate, the primary event in carbon dioxide fixation, as well as the oxidative fragmentation of the pentose substrate in the photorespiration process. Both reactions occur simultaneously and in competition at the same active site. The polypeptide is Ribulose bisphosphate carboxylase large chain (Aethionema cordifolium (Lebanon stonecress)).